The following is a 343-amino-acid chain: MWLEWLVAWSWSLDGLRDCIATGIQSVRDCDGTAVITVACLLVLFVWYCYHVGREQPRPHVSVNSLLQGVDANGLQNGSMYCQSPECVRCTHHDGLNQKLYHNLQEYAKRYSWSGMGRIHKGIREQGRYLSSQPSIQKPEVFFLPDLPTTPYFPRDAQKHDVELLERNFQAILCEFEALYKAFSNCSLPQGWKVNSTPSGEWFTFDFVSQGVCVPRNCRKCPRTYRLLGSLRTCIGNNVFGNACISVLSPGTVITEHYGPTNIRIRCHLGLKTPNGCELVVGGEPQCWAEGRCLLFDDSFLHTSFHEGSAEDGPRVVFMVDLWHPNVAAAERQALDFIFAPGR.

The Cytoplasmic segment spans residues 1 to 31 (MWLEWLVAWSWSLDGLRDCIATGIQSVRDCD). A helical transmembrane segment spans residues 32–52 (GTAVITVACLLVLFVWYCYHV). Topologically, residues 53 to 343 (GREQPRPHVS…ALDFIFAPGR (291 aa)) are lumenal. Residues asparagine 77 and asparagine 185 are each glycosylated (N-linked (GlcNAc...) asparagine). Residues tryptophan 202 and serine 246 each coordinate 2-oxoglutarate. Residue histidine 257 participates in Fe cation binding. 266 to 268 (RCH) serves as a coordination point for 2-oxoglutarate. Histidine 302 contacts Fe cation. Arginine 315 is a binding site for 2-oxoglutarate.

This sequence belongs to the aspartyl/asparaginyl beta-hydroxylase family. Fe cation serves as cofactor.

It is found in the membrane. In terms of biological role, may function as 2-oxoglutarate-dependent dioxygenase. The protein is Aspartate beta-hydroxylase domain-containing protein 2 (Asphd2) of Rattus norvegicus (Rat).